We begin with the raw amino-acid sequence, 260 residues long: Cytosolic Fe-S cluster assembly factor Nubp2 homolog (260 aa).

Residue 14–21 coordinates ATP; that stretch reads GKGGVGKS. Residues Cys-188 and Cys-191 each contribute to the [4Fe-4S] cluster site.

Belongs to the Mrp/NBP35 ATP-binding proteins family. NUBP2/CFD1 subfamily. In terms of assembly, heterotetramer of 2 Nubp1 and 2 Nubp2 chains. It depends on [4Fe-4S] cluster as a cofactor.

The protein resides in the cytoplasm. Its function is as follows. Component of the cytosolic iron-sulfur (Fe/S) protein assembly (CIA) machinery. Required for maturation of extramitochondrial Fe-S proteins. The Nubp1-Nubp2 heterotetramer forms a Fe-S scaffold complex, mediating the de novo assembly of an Fe-S cluster and its transfer to target apoproteins. This chain is Cytosolic Fe-S cluster assembly factor Nubp2 homolog, found in Drosophila melanogaster (Fruit fly).